We begin with the raw amino-acid sequence, 519 residues long: Mannosyl-oligosaccharide alpha-1,2-mannosidase (519 aa).

A signal peptide spans 1–22 (MKGSPVLAVCAAALTLIPSVVA). A glycan (N-linked (GlcNAc...) asparagine) is linked at Asn-187. A disulfide bridge connects residues Cys-337 and Cys-366. Glu-380 serves as the catalytic Proton donor. N-linked (GlcNAc...) asparagine glycosylation occurs at Asn-443. Thr-507 contacts Ca(2+).

Belongs to the glycosyl hydrolase 47 family. Monomer. Ca(2+) serves as cofactor. Requires Mg(2+) as cofactor.

It is found in the secreted. The enzyme catalyses N(4)-(alpha-D-Man-(1-&gt;2)-alpha-D-Man-(1-&gt;2)-alpha-D-Man-(1-&gt;3)-[alpha-D-Man-(1-&gt;2)-alpha-D-Man-(1-&gt;3)-[alpha-D-Man-(1-&gt;2)-alpha-D-Man-(1-&gt;6)]-alpha-D-Man-(1-&gt;6)]-beta-D-Man-(1-&gt;4)-beta-D-GlcNAc-(1-&gt;4)-beta-D-GlcNAc)-L-asparaginyl-[protein] (N-glucan mannose isomer 9A1,2,3B1,2,3) + 4 H2O = N(4)-(alpha-D-Man-(1-&gt;3)-[alpha-D-Man-(1-&gt;3)-[alpha-D-Man-(1-&gt;6)]-alpha-D-Man-(1-&gt;6)]-beta-D-Man-(1-&gt;4)-beta-D-GlcNAc-(1-&gt;4)-beta-D-GlcNAc)-L-asparaginyl-[protein] (N-glucan mannose isomer 5A1,2) + 4 beta-D-mannose. The catalysed reaction is N(4)-(alpha-D-Man-(1-&gt;2)-alpha-D-Man-(1-&gt;2)-alpha-D-Man-(1-&gt;3)-[alpha-D-Man-(1-&gt;3)-[alpha-D-Man-(1-&gt;2)-alpha-D-Man-(1-&gt;6)]-alpha-D-Man-(1-&gt;6)]-beta-D-Man-(1-&gt;4)-beta-D-GlcNAc-(1-&gt;4)-beta-D-GlcNAc)-L-asparaginyl-[protein] (N-glucan mannose isomer 8A1,2,3B1,3) + 3 H2O = N(4)-(alpha-D-Man-(1-&gt;3)-[alpha-D-Man-(1-&gt;3)-[alpha-D-Man-(1-&gt;6)]-alpha-D-Man-(1-&gt;6)]-beta-D-Man-(1-&gt;4)-beta-D-GlcNAc-(1-&gt;4)-beta-D-GlcNAc)-L-asparaginyl-[protein] (N-glucan mannose isomer 5A1,2) + 3 beta-D-mannose. The protein operates within protein modification; protein glycosylation. Functionally, alpha-mannosidase involved in the maturation of Asn-linked oligosaccharides. Progressively trims alpha-1,2-linked mannose residues from Man(9)GlcNAc(2) to produce Man(5)GlcNAc(2). The chain is Mannosyl-oligosaccharide alpha-1,2-mannosidase from Coccidioides posadasii (strain RMSCC 757 / Silveira) (Valley fever fungus).